Reading from the N-terminus, the 345-residue chain is Probable deoxyhypusine synthase 2 (345 aa).

The Nucleophile role is filled by Lys-292.

It belongs to the deoxyhypusine synthase family. Requires NAD(+) as cofactor.

It carries out the reaction [eIF5A protein]-L-lysine + spermidine = [eIF5A protein]-deoxyhypusine + propane-1,3-diamine. It functions in the pathway protein modification; eIF5A hypusination. In terms of biological role, catalyzes the NAD-dependent oxidative cleavage of spermidine and the subsequent transfer of the butylamine moiety of spermidine to the epsilon-amino group of a specific lysine residue of the eIF-5A precursor protein to form the intermediate deoxyhypusine residue. This Methanosarcina acetivorans (strain ATCC 35395 / DSM 2834 / JCM 12185 / C2A) protein is Probable deoxyhypusine synthase 2 (dys2).